The chain runs to 419 residues: Prolyl hydroxylase EGLN2 (419 aa).

Low complexity-rich tracts occupy residues 1 to 18 (MDSP…PQLP) and 64 to 73 (TTATATTTTA). Disordered regions lie at residues 1–89 (MDSP…GELW) and 108–181 (AAQG…REEV). The Bipartite nuclear localization signal signature appears at 89–134 (WPLQSEGAAALVTKECQRLAAQGARPEAPKRKWAKDGGDAPSPSKR). Basic and acidic residues predominate over residues 115–126 (EAPKRKWAKDGG). Phosphoserine is present on S130. Low complexity predominate over residues 154 to 174 (SGASNSSSSSSNTTSSSGEAS). The tract at residues 237 to 247 (VSQRAIPPRSI) is beta(2)beta(3) 'finger-like' loop. The Fe2OG dioxygenase domain maps to 290–388 (GRTKAMVACY…RYAITVWYFD (99 aa)). H309, D311, and H370 together coordinate Fe cation. R379 contributes to the 2-oxoglutarate binding site.

As to quaternary structure, interacts with E3 ligase SIAH2. Interacts with LIMD1, WTIP and AJUBA. Fe(2+) serves as cofactor. The cofactor is L-ascorbate. Post-translationally, ubiquitinated by SIAH1 and/or SIAH2 in response to the unfolded protein response (UPR), leading to its degradation. As to expression, highly expressed in testis, expression was also detected in the heart brain, liver kidney and lung. Expression was lowest in spleen and skeletal muscle. Constitutively expressed during differentiation of C2C12 skeletal myocytes.

It localises to the nucleus. The catalysed reaction is L-prolyl-[protein] + 2-oxoglutarate + O2 = trans-4-hydroxy-L-prolyl-[protein] + succinate + CO2. It catalyses the reaction L-prolyl-[hypoxia-inducible factor alpha subunit] + 2-oxoglutarate + O2 = trans-4-hydroxy-L-prolyl-[hypoxia-inducible factor alpha subunit] + succinate + CO2. Functionally, prolyl hydroxylase that mediates hydroxylation of proline residues in target proteins, such as ATF4, IKBKB, CEP192 and HIF1A. Target proteins are preferentially recognized via a LXXLAP motif. Cellular oxygen sensor that catalyzes, under normoxic conditions, the post-translational formation of 4-hydroxyproline in hypoxia-inducible factor (HIF) alpha proteins. Hydroxylates a specific proline found in each of the oxygen-dependent degradation (ODD) domains (N-terminal, NODD, and C-terminal, CODD) of HIF1A. Also hydroxylates HIF2A. Has a preference for the CODD site for both HIF1A and HIF2A. Hydroxylated HIFs are then targeted for proteasomal degradation via the von Hippel-Lindau ubiquitination complex. Under hypoxic conditions, the hydroxylation reaction is attenuated allowing HIFs to escape degradation resulting in their translocation to the nucleus, heterodimerization with HIF1B, and increased expression of hypoxy-inducible genes. EGLN2 is involved in regulating hypoxia tolerance and apoptosis in cardiac and skeletal muscle. Also regulates susceptibility to normoxic oxidative neuronal death. Links oxygen sensing to cell cycle and primary cilia formation by hydroxylating the critical centrosome component CEP192 which promotes its ubiquitination and subsequent proteasomal degradation. Hydroxylates IKBKB, mediating NF-kappa-B activation in hypoxic conditions. Also mediates hydroxylation of ATF4, leading to decreased protein stability of ATF4. The polypeptide is Prolyl hydroxylase EGLN2 (Mus musculus (Mouse)).